The chain runs to 582 residues: Membrane protein insertase YidC (582 aa).

The next 4 membrane-spanning stretches (helical) occupy residues 4–24 (NTVL…YIQQ), 376–396 (IIPN…IIFF), 446–466 (ASGC…FGLF), and 542–562 (FMPL…LLFW).

Belongs to the OXA1/ALB3/YidC family. Type 1 subfamily. Interacts with the Sec translocase complex via SecD. Specifically interacts with transmembrane segments of nascent integral membrane proteins during membrane integration.

It is found in the cell inner membrane. In terms of biological role, required for the insertion and/or proper folding and/or complex formation of integral membrane proteins into the membrane. Involved in integration of membrane proteins that insert both dependently and independently of the Sec translocase complex, as well as at least some lipoproteins. Aids folding of multispanning membrane proteins. The polypeptide is Membrane protein insertase YidC (Treponema denticola (strain ATCC 35405 / DSM 14222 / CIP 103919 / JCM 8153 / KCTC 15104)).